We begin with the raw amino-acid sequence, 540 residues long: 2-isopropylmalate synthase (540 aa).

Residues 8–273 (VLIFDTTLRD…FFGRDQDSPT (266 aa)) form the Pyruvate carboxyltransferase domain. Mn(2+)-binding residues include Asp17, His208, His210, and Asn244. The interval 408–540 (QLQLVQVSCG…AVVLDARPTL (133 aa)) is regulatory domain.

The protein belongs to the alpha-IPM synthase/homocitrate synthase family. LeuA type 1 subfamily. As to quaternary structure, homodimer. Mn(2+) serves as cofactor.

It is found in the cytoplasm. It carries out the reaction 3-methyl-2-oxobutanoate + acetyl-CoA + H2O = (2S)-2-isopropylmalate + CoA + H(+). The protein operates within amino-acid biosynthesis; L-leucine biosynthesis; L-leucine from 3-methyl-2-oxobutanoate: step 1/4. Functionally, catalyzes the condensation of the acetyl group of acetyl-CoA with 3-methyl-2-oxobutanoate (2-ketoisovalerate) to form 3-carboxy-3-hydroxy-4-methylpentanoate (2-isopropylmalate). The polypeptide is 2-isopropylmalate synthase (Parasynechococcus marenigrum (strain WH8102)).